The primary structure comprises 175 residues: EKC/KEOPS complex subunit TPRKB (175 aa).

This sequence belongs to the CGI121/TPRKB family. Component of the EKC/KEOPS complex.

Its subcellular location is the cytoplasm. It localises to the cytosol. The protein localises to the nucleus. In terms of biological role, component of the EKC/KEOPS complex that is required for the formation of a threonylcarbamoyl group on adenosine at position 37 (t(6)A37) in tRNAs that read codons beginning with adenine. The complex is probably involved in the transfer of the threonylcarbamoyl moiety of threonylcarbamoyl-AMP (TC-AMP) to the N6 group of A37. Tprkb acts as an allosteric effector that regulates the t(6)A activity of the complex. This is EKC/KEOPS complex subunit TPRKB from Danio rerio (Zebrafish).